We begin with the raw amino-acid sequence, 157 residues long: 6,7-dimethyl-8-ribityllumazine synthase (157 aa).

Residues tryptophan 27, 59–61 (AIE), and 81–83 (VVI) contribute to the 5-amino-6-(D-ribitylamino)uracil site. 86–87 (ET) provides a ligand contact to (2S)-2-hydroxy-3-oxobutyl phosphate. Histidine 89 acts as the Proton donor in catalysis. Asparagine 114 contributes to the 5-amino-6-(D-ribitylamino)uracil binding site. Arginine 128 serves as a coordination point for (2S)-2-hydroxy-3-oxobutyl phosphate.

The protein belongs to the DMRL synthase family. In terms of assembly, homopentamer.

It carries out the reaction (2S)-2-hydroxy-3-oxobutyl phosphate + 5-amino-6-(D-ribitylamino)uracil = 6,7-dimethyl-8-(1-D-ribityl)lumazine + phosphate + 2 H2O + H(+). The protein operates within cofactor biosynthesis; riboflavin biosynthesis; riboflavin from 2-hydroxy-3-oxobutyl phosphate and 5-amino-6-(D-ribitylamino)uracil: step 1/2. Catalyzes the formation of 6,7-dimethyl-8-ribityllumazine by condensation of 5-amino-6-(D-ribitylamino)uracil with 3,4-dihydroxy-2-butanone 4-phosphate. This is the penultimate step in the biosynthesis of riboflavin. The polypeptide is 6,7-dimethyl-8-ribityllumazine synthase (Mycolicibacterium vanbaalenii (strain DSM 7251 / JCM 13017 / BCRC 16820 / KCTC 9966 / NRRL B-24157 / PYR-1) (Mycobacterium vanbaalenii)).